The primary structure comprises 227 residues: MSIIVALDAKSQYDALSIADQLDPSLCRVKVGKELFTHDGPQTVRILQDRGFELFLDLKFHDIPNTTAQAVCAAADLGVWMVNVHASGGRKMMETCVERLKAGNYRTQLIAVTVLTSMGREDLRDIGLDVEPFEQVKRLAQLTQESGLDGVVCSAQEAKMLRDLLGTEFALVTPGIRPEGANADDQKRIVTPKQAMLDGSTHLVIGRPITKSERPNEMLKQILSSLA.

Substrate is bound by residues aspartate 8, lysine 30, 57–66 (DLKFHDIPNT), threonine 116, arginine 177, glutamine 186, glycine 206, and arginine 207. The Proton donor role is filled by lysine 59.

Belongs to the OMP decarboxylase family. Type 1 subfamily. In terms of assembly, homodimer.

The enzyme catalyses orotidine 5'-phosphate + H(+) = UMP + CO2. The protein operates within pyrimidine metabolism; UMP biosynthesis via de novo pathway; UMP from orotate: step 2/2. Its function is as follows. Catalyzes the decarboxylation of orotidine 5'-monophosphate (OMP) to uridine 5'-monophosphate (UMP). This chain is Orotidine 5'-phosphate decarboxylase, found in Acinetobacter baylyi (strain ATCC 33305 / BD413 / ADP1).